Consider the following 482-residue polypeptide: Alpha-ketoglutarate semialdehyde dehydrogenase (482 aa).

Positions 1 to 28 are disordered; sequence MTDPSKNYVNGEWVTSETGETTEVTNPA. Residues 11-25 are compositionally biased toward low complexity; the sequence is GEWVTSETGETTEVT. The active site involves C284.

The protein belongs to the aldehyde dehydrogenase family. As to quaternary structure, homotetramer.

It catalyses the reaction 2,5-dioxopentanoate + NADP(+) + H2O = 2-oxoglutarate + NADPH + 2 H(+). It functions in the pathway carbohydrate metabolism; D-xylose degradation. Alpha-ketoglutarate semialdehyde dehydrogenase involved in the degradation of D-xylose, a major component of hemicelluloses such as xylan. Catalyzes the fifth reaction in the xylose utilization pathway through dehydratation of alpha-ketoglutarate semialdehyde (2,5-dioxopentanoate) into alpha-ketoglutarate. This is Alpha-ketoglutarate semialdehyde dehydrogenase from Haloferax volcanii (strain ATCC 29605 / DSM 3757 / JCM 8879 / NBRC 14742 / NCIMB 2012 / VKM B-1768 / DS2) (Halobacterium volcanii).